Here is a 392-residue protein sequence, read N- to C-terminus: Peptidoglycan hydrolase PcsB (392 aa).

Residues 1–27 (MKKKILASLLLSTVMVSQVAVLTTAHA) form the signal peptide. 2 coiled-coil regions span residues 34–96 (IAAQ…LSKN) and 191–227 (TKQAELKAAELSLAAEKATAEGEKASLLEQKAAAEAE). The segment at 47–267 (QQQEAQKQVD…TAQVQAVSES (221 aa)) is interacts with large extracellular loop of FtsX. The Peptidase C51 domain maps to 267–390 (SAAAPVRAKV…TSEGFVTYIY (124 aa)).

In terms of assembly, homodimer. Interacts (via N-terminal coiled coil domain) with FtsX (via large extracellular loop). This interaction directs PcsB to equatorial and septal sites of dividing cells. Interacts with FtsE.

It is found in the cell membrane. It localises to the cell septum. The protein localises to the secreted. Lacks peptidoglycan-hydrolase activity in vitro, probably due to auto-inhibition by the CC domain. In the homodimer, interaction between the CC domain in one monomer and the hydrolase active site in the peptidase C51/CHAP domain in the other monomer probably mediates auto-inhibition of the hydrolase activity. Its function is as follows. Peptidoglycan-hydrolase activity. Required in maintaining normal growth and cellular morphology. Involved in splitting of the septum during cell division. The chain is Peptidoglycan hydrolase PcsB from Streptococcus pneumoniae serotype 2 (strain D39 / NCTC 7466).